The chain runs to 258 residues: tRNA pseudouridine synthase A (258 aa).

Asp-55 serves as the catalytic Nucleophile. Tyr-113 serves as a coordination point for substrate.

This sequence belongs to the tRNA pseudouridine synthase TruA family. In terms of assembly, homodimer.

It carries out the reaction uridine(38/39/40) in tRNA = pseudouridine(38/39/40) in tRNA. In terms of biological role, formation of pseudouridine at positions 38, 39 and 40 in the anticodon stem and loop of transfer RNAs. The polypeptide is tRNA pseudouridine synthase A (Limosilactobacillus fermentum (strain NBRC 3956 / LMG 18251) (Lactobacillus fermentum)).